A 507-amino-acid chain; its full sequence is Glutamyl-tRNA(Gln) amidotransferase subunit A, mitochondrial (507 aa).

A disordered region spans residues 29–51; it reads THPPEPIPPPPPPAPSSSPSPKQ. Residues 31–46 are compositionally biased toward pro residues; sequence PPEPIPPPPPPAPSSS. Residues lysine 57 and serine 135 each act as charge relay system in the active site. Serine 159 acts as the Acyl-ester intermediate in catalysis.

Belongs to the amidase family. GatA subfamily. As to quaternary structure, subunit of the heterotrimeric GatCAB amidotransferase (AdT) complex, composed of A, B and C subunits.

Its subcellular location is the mitochondrion. It carries out the reaction L-glutamyl-tRNA(Gln) + L-glutamine + ATP + H2O = L-glutaminyl-tRNA(Gln) + L-glutamate + ADP + phosphate + H(+). In terms of biological role, allows the formation of correctly charged Gln-tRNA(Gln) through the transamidation of misacylated Glu-tRNA(Gln) in the mitochondria. The reaction takes place in the presence of glutamine and ATP through an activated gamma-phospho-Glu-tRNA(Gln). This is Glutamyl-tRNA(Gln) amidotransferase subunit A, mitochondrial from Podospora anserina (strain S / ATCC MYA-4624 / DSM 980 / FGSC 10383) (Pleurage anserina).